The chain runs to 342 residues: Ankyrin repeat domain-containing protein 2A (342 aa).

The segment at 1-41 is disordered; it reads MASNSEKNPLLSDEKPKSTEENKSSKPESASGSSTSSAMPG. The span at 12-26 shows a compositional bias: basic and acidic residues; sequence SDEKPKSTEENKSSK. Over residues 27–37 the composition is skewed to low complexity; sequence PESASGSSTSS. 4 ANK repeats span residues 217–246, 250–279, 283–312, and 316–342; these read EEES…NKDE, EGRT…SVNA, NKNT…AVTL, and DEKT…DAFL. Residues H223 and E246 each coordinate a 1,2-diacyl-3-O-(beta-D-galactosyl)-sn-glycerol. The a 1,2-diacyl-sn-glycero-3-phospho-(1'-sn-glycerol) site is built by Y294 and R296.

As to quaternary structure, interacts with TOM20-4, CYTB5-E, CBR1, APX3, APX5, TOC34 and GRF6. Binds to chloroplast outer envelope membrane (OEM) protein targeting signals, as well as to chloroplasts. Interacts with OEP7. Binds to HSP17.8 via its ankyrin repeats, this interaction enhances chaperone activity and chloroplast binding. Also interacts with HSP17.4A, HSP17.6A and HSP18.1. Binds specifically to two chloroplast glycolipids, monogalactosyldiacylglycerol (MGDG) and phosphatidylglycerol (PG). As to expression, ubiquitously expressed at basal level.

Its subcellular location is the cytoplasm. It localises to the nucleus. The protein resides in the plastid. It is found in the chloroplast outer membrane. Exhibits chaperone activity toward chloroplast outer envelope membrane, mitochondrion outer membrane, endoplasmic reticulum membrane and peroxisomal proteins, by recruiting specific proteins containing a single transmembrane associated with an AKR2A-binding sequence (ABS) and subsequently binding glycolipids (e.g. monogalactosyldiacylglycerol (MGDG) and phosphatidylglycerol (PG)) present in the membrane of the target organelle. Seems to be involved in the regulation of hydrogen peroxide levels during biotic and abiotic stresses by optimizing the ascorbate peroxidase 3 (APX3) hydrogen peroxide-degrading activity. This regulation might be monitored by GRF6. Cytosolic targeting factor for chloroplast outer membrane (COM) proteins that mediates sorting and targeting of nascent chloroplast outer envelope membrane (OEM) proteins to the chloroplast. Facilitates the targeting of OEP7 to chloroplasts. Facilitates the targeting of APX3 to peroxisomes. Involved in cellular metabolism (e.g. peroxisome activity) and required for plant growth and development. The protein is Ankyrin repeat domain-containing protein 2A of Arabidopsis thaliana (Mouse-ear cress).